A 53-amino-acid chain; its full sequence is Serine rich endogenous peptide 3 (53 aa).

Positions 1–26 (MTKKGPLNLRLLLLLLVVLLPSCSNC) are cleaved as a signal peptide. Positions 37 to 53 (SSEWRRKMITVWSKSSY) match the SCOOP motif motif. Positions 49–51 (SKS) match the SxS motif essential for MIK2 binding motif.

It belongs to the serine rich endogenous peptide (SCOOP) phytocytokine family. In terms of assembly, interacts with MIK2 (via extracellular leucine-rich repeat domain); this interaction triggers the formation of complex between MIK2 and the BAK1/SERK3 and SERK4 coreceptors, and subsequent BAK1 activation by phosphorylation.

The protein localises to the cell membrane. It localises to the secreted. The protein resides in the extracellular space. Its subcellular location is the apoplast. Its function is as follows. Brassicaceae-specific phytocytokine (plant endogenous peptide released into the apoplast) perceived by MIK2 in a BAK1/SERK3 and SERK4 coreceptors-dependent manner, that modulates various physiological and antimicrobial processes including growth prevention and reactive oxygen species (ROS) response regulation. The protein is Serine rich endogenous peptide 3 of Arabidopsis thaliana (Mouse-ear cress).